The sequence spans 220 residues: Deoxyribose-phosphate aldolase (220 aa).

Asp-89 acts as the Proton donor/acceptor in catalysis. Lys-151 serves as the catalytic Schiff-base intermediate with acetaldehyde. Lys-180 acts as the Proton donor/acceptor in catalysis.

This sequence belongs to the DeoC/FbaB aldolase family. DeoC type 1 subfamily.

Its subcellular location is the cytoplasm. The catalysed reaction is 2-deoxy-D-ribose 5-phosphate = D-glyceraldehyde 3-phosphate + acetaldehyde. It functions in the pathway carbohydrate degradation; 2-deoxy-D-ribose 1-phosphate degradation; D-glyceraldehyde 3-phosphate and acetaldehyde from 2-deoxy-alpha-D-ribose 1-phosphate: step 2/2. In terms of biological role, catalyzes a reversible aldol reaction between acetaldehyde and D-glyceraldehyde 3-phosphate to generate 2-deoxy-D-ribose 5-phosphate. The polypeptide is Deoxyribose-phosphate aldolase (Macrococcus caseolyticus (strain JCSC5402) (Macrococcoides caseolyticum)).